The following is a 374-amino-acid chain: Probable quinol oxidase subunit 2 (374 aa).

The signal sequence occupies residues 1–19 (MSKFKSLLLLFGTLILLSG). The N-palmitoyl cysteine moiety is linked to residue C20. C20 carries the S-diacylglycerol cysteine lipid modification. The next 2 membrane-spanning stretches (helical) occupy residues 43–63 (SIIF…IFIF) and 82–102 (IETI…IPTV). The disordered stretch occupies residues 317 to 374 (ERHGMKPMILGNNEKYDNEFKKEEDHNSKEMEKISKGAKDENASKLHKKEHDDHGGGH). Positions 330–374 (EKYDNEFKKEEDHNSKEMEKISKGAKDENASKLHKKEHDDHGGGH) are enriched in basic and acidic residues.

Belongs to the cytochrome c oxidase subunit 2 family.

Its subcellular location is the cell membrane. It carries out the reaction 2 a quinol + O2 = 2 a quinone + 2 H2O. Catalyzes quinol oxidation with the concomitant reduction of oxygen to water. Subunit II transfers the electrons from a quinol to the binuclear center of the catalytic subunit I. The chain is Probable quinol oxidase subunit 2 (qoxA) from Staphylococcus epidermidis (strain ATCC 12228 / FDA PCI 1200).